The chain runs to 334 residues: Sulfhydrogenase 2 subunit beta (334 aa).

4Fe-4S ferredoxin-type domains lie at 220–250 (KVWK…VCDT) and 294–328 (CKNY…VLDE). [4Fe-4S] cluster contacts are provided by Cys-229, Cys-232, Cys-235, Cys-239, Cys-306, Cys-309, Cys-312, and Cys-316.

Dimer of heterotetramer of alpha, beta, gamma and delta subunits. The nickel-containing alpha and delta subunits constitute the hydrogenase activity. The beta and gamma subunits (flavin-containing dimer) constitute the sulfur reductase activity. [4Fe-4S] cluster is required as a cofactor.

It localises to the cytoplasm. It carries out the reaction n sulfur + H2 = (n-1) sulfur + hydrogen sulfide + H(+). Functionally, part of a bifunctional enzyme complex that functions as a hydrogen-evolving hydrogenase with sulfur-reducing activity. May play a role in hydrogen cycling during fermentative growth. Activity exhibited with NAD in addition to NADPH. The beta and gamma subunits form the sulfur-reducing component that catalyzes the cytoplasmic production of hydrogen sulfide in the presence of elemental sulfur. In Pyrococcus furiosus (strain ATCC 43587 / DSM 3638 / JCM 8422 / Vc1), this protein is Sulfhydrogenase 2 subunit beta.